We begin with the raw amino-acid sequence, 283 residues long: Diphthine methyl ester synthase (283 aa).

S-adenosyl-L-methionine contacts are provided by residues L9, D84, G87, 112–113 (SI), L163, M221, and H246.

This sequence belongs to the diphthine synthase family.

It localises to the cytoplasm. It carries out the reaction 2-[(3S)-amino-3-carboxypropyl]-L-histidyl-[translation elongation factor 2] + 4 S-adenosyl-L-methionine = diphthine methyl ester-[translation elongation factor 2] + 4 S-adenosyl-L-homocysteine + 3 H(+). Its pathway is protein modification; peptidyl-diphthamide biosynthesis. S-adenosyl-L-methionine-dependent methyltransferase that catalyzes four methylations of the modified target histidine residue in translation elongation factor 2 (EF-2), to form an intermediate called diphthine methyl ester. The four successive methylation reactions represent the second step of diphthamide biosynthesis. The polypeptide is Diphthine methyl ester synthase (dph5) (Schizosaccharomyces pombe (strain 972 / ATCC 24843) (Fission yeast)).